Here is a 286-residue protein sequence, read N- to C-terminus: Bifunctional protein FolD (286 aa).

NADP(+)-binding positions include 164 to 166 (GRS), Ser193, and Ile234.

The protein belongs to the tetrahydrofolate dehydrogenase/cyclohydrolase family. Homodimer.

The enzyme catalyses (6R)-5,10-methylene-5,6,7,8-tetrahydrofolate + NADP(+) = (6R)-5,10-methenyltetrahydrofolate + NADPH. It catalyses the reaction (6R)-5,10-methenyltetrahydrofolate + H2O = (6R)-10-formyltetrahydrofolate + H(+). The protein operates within one-carbon metabolism; tetrahydrofolate interconversion. Functionally, catalyzes the oxidation of 5,10-methylenetetrahydrofolate to 5,10-methenyltetrahydrofolate and then the hydrolysis of 5,10-methenyltetrahydrofolate to 10-formyltetrahydrofolate. This Oleidesulfovibrio alaskensis (strain ATCC BAA-1058 / DSM 17464 / G20) (Desulfovibrio alaskensis) protein is Bifunctional protein FolD.